A 361-amino-acid polypeptide reads, in one-letter code: 3-dehydroquinate synthase (361 aa).

NAD(+) is bound by residues 72–77 (SGEKEK), 130–131 (TT), lysine 142, and lysine 151. Glutamate 184, histidine 247, and histidine 264 together coordinate Zn(2+).

Belongs to the sugar phosphate cyclases superfamily. Dehydroquinate synthase family. Co(2+) is required as a cofactor. The cofactor is Zn(2+). It depends on NAD(+) as a cofactor.

The protein resides in the cytoplasm. The enzyme catalyses 7-phospho-2-dehydro-3-deoxy-D-arabino-heptonate = 3-dehydroquinate + phosphate. Its pathway is metabolic intermediate biosynthesis; chorismate biosynthesis; chorismate from D-erythrose 4-phosphate and phosphoenolpyruvate: step 2/7. In terms of biological role, catalyzes the conversion of 3-deoxy-D-arabino-heptulosonate 7-phosphate (DAHP) to dehydroquinate (DHQ). This chain is 3-dehydroquinate synthase, found in Bacillus mycoides (strain KBAB4) (Bacillus weihenstephanensis).